Consider the following 75-residue polypeptide: ATP synthase subunit c (75 aa).

Transmembrane regions (helical) follow at residues 8-28 (FIAI…VANI) and 54-74 (AGMV…LMFV).

It belongs to the ATPase C chain family. F-type ATPases have 2 components, F(1) - the catalytic core - and F(0) - the membrane proton channel. F(1) has five subunits: alpha(3), beta(3), gamma(1), delta(1), epsilon(1). F(0) has three main subunits: a(1), b(2) and c(10-14). The alpha and beta chains form an alternating ring which encloses part of the gamma chain. F(1) is attached to F(0) by a central stalk formed by the gamma and epsilon chains, while a peripheral stalk is formed by the delta and b chains.

The protein localises to the cell membrane. Its function is as follows. F(1)F(0) ATP synthase produces ATP from ADP in the presence of a proton or sodium gradient. F-type ATPases consist of two structural domains, F(1) containing the extramembraneous catalytic core and F(0) containing the membrane proton channel, linked together by a central stalk and a peripheral stalk. During catalysis, ATP synthesis in the catalytic domain of F(1) is coupled via a rotary mechanism of the central stalk subunits to proton translocation. Functionally, key component of the F(0) channel; it plays a direct role in translocation across the membrane. A homomeric c-ring of between 10-14 subunits forms the central stalk rotor element with the F(1) delta and epsilon subunits. This is ATP synthase subunit c from Wolbachia sp. subsp. Brugia malayi (strain TRS).